We begin with the raw amino-acid sequence, 450 residues long: F-box/FBD/LRR-repeat protein At5g22660 (450 aa).

Residues 12–58 (EDRISSLPDHLLSQILSNLPTENAVTTSILSTRWKDLWLSTPVLDID) form the F-box domain. LRR repeat units lie at residues 157–181 (LPNL…KFIS) and 294–317 (LSSL…LKHE). One can recognise an FBD domain in the interval 364–416 (EEISLSSSVPKCLQSSLENVEIIRPNYGSGEEMKLSKYFLENSLVLKKFKLCR).

In Arabidopsis thaliana (Mouse-ear cress), this protein is F-box/FBD/LRR-repeat protein At5g22660.